A 304-amino-acid chain; its full sequence is UDP-3-O-acyl-N-acetylglucosamine deacetylase (304 aa).

The Zn(2+) site is built by histidine 78, histidine 237, and aspartate 241. The active-site Proton donor is the histidine 264.

The protein belongs to the LpxC family. It depends on Zn(2+) as a cofactor.

The enzyme catalyses a UDP-3-O-[(3R)-3-hydroxyacyl]-N-acetyl-alpha-D-glucosamine + H2O = a UDP-3-O-[(3R)-3-hydroxyacyl]-alpha-D-glucosamine + acetate. It participates in glycolipid biosynthesis; lipid IV(A) biosynthesis; lipid IV(A) from (3R)-3-hydroxytetradecanoyl-[acyl-carrier-protein] and UDP-N-acetyl-alpha-D-glucosamine: step 2/6. In terms of biological role, catalyzes the hydrolysis of UDP-3-O-myristoyl-N-acetylglucosamine to form UDP-3-O-myristoylglucosamine and acetate, the committed step in lipid A biosynthesis. The polypeptide is UDP-3-O-acyl-N-acetylglucosamine deacetylase (Legionella pneumophila (strain Lens)).